A 1024-amino-acid polypeptide reads, in one-letter code: MTMITDSLAVVLQRRDWENPGVTQLNRLAAHPPFASWRNSEEARTDRPSQQLRSLNGEWRFAWFPAPEAVPESWLECDLPDADTIVVPSNWQMHGYDAPIYTNVTYPITVNPPFVPVENPTGCYSLTFNVDESWLQEGQTRIIFDGVNSAFHLWCNGRWVGYGQDSRLPSEFDLSAFLRAGENRLAVMVLRWSDGSYLEDQDMWRMSGIFRDVSLLHKPTTQISDFHVATRFNDDFSRAVLEAEVQMCGELRDELRVTVSLWQGETQVASGTTPFGGEIIDERGGYADRVTLRLNVENPALWSAEIPNLYRAVVKLHTADGTLIEAEACDVGFREVRIENGLLLLNGKPLLIRGVNRHEHHPLHGQVMDEQTMVQDILLMKQNNFNAVRCSHYPNHPLWYTLCDRYGLYVVDEANIETHGMVPMNRLTDDPRWLPAMSERVTRMVQRDRNHPSVIIWSLGNESGHGANHDALYRWIKSVDPSRPVQYEGGGADTSATDIICPMYARVDEDQPFPAVPKWSIKKWLSLPGELRPLILCEYAHAMGNSLGGFAKYWQAFRQYPRLQGGFVWDWVDQSLIKYDENGNPWSAYGGDFGDTPNDRQFCMNGLVFADRTPHPALTEAKHQQQFFQFRLSGRTIEVTSEYLFRHSDNELLHWTVALDGKPLASGEVPLDVAPQGKQVIELPVLPQPESTGQLWLTVHVVQPNATAWSEAGHISAWHQWRLAENLSVTLPAASHSIPHLTTSEMDFCIELGNKRWQFNRQSGFLSQMWIGDEKQLLTPLRAQFTRAPLDNDIGVSEATRIDPNAWVERWKAAGHYQAEAALLQCTADTLADAVLITTAHAWQHQGKTLFISRKTYRIDGSGQMAITVDVEVASDTPHPARIGLTCQLAQVAERVNWLGLGPQENYPDRLTAACFDRWDLPLSDMYTPYVFPSENGLRCGTRELNYGPHQWRGDFQFNISRYSQQQLMETSHRHLLHAEEGTWLNIDGFHMGIGGDDSWSPSVSAEFQLSAGRYHYQLVWCQK.

2 residues coordinate substrate: N103 and D202. D202 lines the Na(+) pocket. Residues E417, H419, and E462 each coordinate Mg(2+). Substrate contacts are provided by residues E462 and 538–541 (EYAH). The Proton donor role is filled by E462. Residue E538 is the Nucleophile of the active site. Residue N598 coordinates Mg(2+). The Na(+) site is built by F602 and N605. Substrate is bound by residues N605 and W1000.

It belongs to the glycosyl hydrolase 2 family. Homotetramer. The cofactor is Mg(2+). Na(+) is required as a cofactor.

The catalysed reaction is Hydrolysis of terminal non-reducing beta-D-galactose residues in beta-D-galactosides.. This is Beta-galactosidase from Escherichia coli O17:K52:H18 (strain UMN026 / ExPEC).